We begin with the raw amino-acid sequence, 3078 residues long: Probable polyketide synthase 34 (3078 aa).

In terms of domain architecture, Ketosynthase family 3 (KS3) spans 28–462 (SGDVAVIGIG…GSNVCLILSE (435 aa)). Residues Cys-200, His-339, and His-385 each act as for beta-ketoacyl synthase activity in the active site. Residues 665–698 (GVSADIIIGHSLGEISSSYCSGIIDFQTLCYLTY) form an acyl/malonyl transferase region. Residue Ser-675 is the For acyl/malonyl transferase activity of the active site. The N-terminal hotdog fold stretch occupies residues 954–1083 (HEKIKNEGPS…GNFSLTKHNI (130 aa)). The 311-residue stretch at 954-1264 (HEKIKNEGPS…CTIVGSNPDS (311 aa)) folds into the PKS/mFAS DH domain. Residue His-995 is the Proton acceptor; for dehydratase activity of the active site. Positions 1099 to 1264 (NFTSISKQDL…CTIVGSNPDS (166 aa)) are C-terminal hotdog fold. Residue Asp-1171 is the Proton donor; for dehydratase activity of the active site. The disordered stretch occupies residues 1375–1396 (NINNNNNNNNNNNNNNNNNSNG). Residues 2541–2618 (DNNEIIRSTI…QSIEIIKSAH (78 aa)) form the Carrier domain. The residue at position 2578 (Ser-2578) is an O-(pantetheine 4'-phosphoryl)serine. Disordered regions lie at residues 2617–2640 (AHNN…NNNN) and 2739–2761 (NKGS…DNNS). Positions 2619–2640 (NNNNNNNNNNNNNNNNNNNNNN) are enriched in low complexity. Residues 2621 to 2652 (NNNNNNNNNNNNNNNNNNNNLVKKEQQSLDEF) adopt a coiled-coil conformation.

The cofactor is pantetheine 4'-phosphate.

Functionally, probable polyketide synthase. In Dictyostelium discoideum (Social amoeba), this protein is Probable polyketide synthase 34 (pks34).